A 235-amino-acid polypeptide reads, in one-letter code: Phosphoribosylaminoimidazole-succinocarboxamide synthase (235 aa).

This sequence belongs to the SAICAR synthetase family.

It carries out the reaction 5-amino-1-(5-phospho-D-ribosyl)imidazole-4-carboxylate + L-aspartate + ATP = (2S)-2-[5-amino-1-(5-phospho-beta-D-ribosyl)imidazole-4-carboxamido]succinate + ADP + phosphate + 2 H(+). Its pathway is purine metabolism; IMP biosynthesis via de novo pathway; 5-amino-1-(5-phospho-D-ribosyl)imidazole-4-carboxamide from 5-amino-1-(5-phospho-D-ribosyl)imidazole-4-carboxylate: step 1/2. In Prosthecochloris aestuarii (strain DSM 271 / SK 413), this protein is Phosphoribosylaminoimidazole-succinocarboxamide synthase.